A 134-amino-acid chain; its full sequence is MSNTRTVHSSTSISKMNSALQISCLLVVLGCLLGSGHCQSEAEFAAKSREIAQVFGNPSVDKYTKARNLPTLIAFYEKYSSRLRLTPQERISINNAMRQYKAQRNQQVDGVSAQGGWLSDIIKTAISIIVKAVE.

The first 38 residues, 1-38, serve as a signal peptide directing secretion; that stretch reads MSNTRTVHSSTSISKMNSALQISCLLVVLGCLLGSGHC.

This sequence belongs to the Turandot family.

The protein localises to the secreted. Functionally, a humoral factor that may play a role in stress tolerance. In Drosophila melanogaster (Fruit fly), this protein is Protein Turandot E.